The chain runs to 176 residues: Inner membrane-spanning protein YciB (176 aa).

Transmembrane regions (helical) follow at residues 23-43 (MIAA…FLYW), 50-70 (TMQW…IVLG), 74-94 (FIMW…WGSH), 119-139 (LTYM…FVFT), and 150-170 (MFGS…YLST).

This sequence belongs to the YciB family.

Its subcellular location is the cell inner membrane. Plays a role in cell envelope biogenesis, maintenance of cell envelope integrity and membrane homeostasis. This Neisseria meningitidis serogroup A / serotype 4A (strain DSM 15465 / Z2491) protein is Inner membrane-spanning protein YciB.